The primary structure comprises 523 residues: 2-isopropylmalate synthase (523 aa).

One can recognise a Pyruvate carboxyltransferase domain in the interval 5-267 (VIIFDTTLRD…HTNINHHEIW (263 aa)). 4 residues coordinate Mn(2+): D14, H202, H204, and N238. The tract at residues 392–523 (RLDYFNVQSG…QNKENNKETV (132 aa)) is regulatory domain.

Belongs to the alpha-IPM synthase/homocitrate synthase family. LeuA type 1 subfamily. In terms of assembly, homodimer. Mn(2+) serves as cofactor.

Its subcellular location is the cytoplasm. It carries out the reaction 3-methyl-2-oxobutanoate + acetyl-CoA + H2O = (2S)-2-isopropylmalate + CoA + H(+). It participates in amino-acid biosynthesis; L-leucine biosynthesis; L-leucine from 3-methyl-2-oxobutanoate: step 1/4. Functionally, catalyzes the condensation of the acetyl group of acetyl-CoA with 3-methyl-2-oxobutanoate (2-ketoisovalerate) to form 3-carboxy-3-hydroxy-4-methylpentanoate (2-isopropylmalate). This Klebsiella pneumoniae subsp. pneumoniae (strain ATCC 700721 / MGH 78578) protein is 2-isopropylmalate synthase.